A 679-amino-acid polypeptide reads, in one-letter code: Glycine--tRNA ligase beta subunit (679 aa).

This sequence belongs to the class-II aminoacyl-tRNA synthetase family. Tetramer of two alpha and two beta subunits.

The protein resides in the cytoplasm. It catalyses the reaction tRNA(Gly) + glycine + ATP = glycyl-tRNA(Gly) + AMP + diphosphate. This is Glycine--tRNA ligase beta subunit from Streptococcus pyogenes serotype M1.